The following is a 109-amino-acid chain: Protease inhibitor SIL-V2 (109 aa).

Disulfide bonds link C30/C45 and C67/C97.

Belongs to the protease inhibitor I16 (SSI) family. As to quaternary structure, homodimer.

It is found in the secreted. This chain is Protease inhibitor SIL-V2, found in Streptomyces orinoci (Streptoverticillium orinoci).